Reading from the N-terminus, the 365-residue chain is Putative glycosyltransferase C06E1.7 (365 aa).

It belongs to the glycosyltransferase 11 family.

The sequence is that of Putative glycosyltransferase C06E1.7 from Caenorhabditis elegans.